We begin with the raw amino-acid sequence, 351 residues long: Fruit bromelain (351 aa).

An N-terminal signal peptide occupies residues 1-24 (MASKVQLVFLFLFLCAMWASPSAA). Positions 25–121 (SRDEPNDPMM…VVSFDDVNIS (97 aa)) are cleaved as a propeptide — activation peptide. The N-linked (GlcNAc...) asparagine glycan is linked to Asn119. 3 disulfide bridges follow: Cys144–Cys184, Cys178–Cys217, and Cys273–Cys325. The active site involves Cys147. Catalysis depends on residues His279 and Asn300.

The protein belongs to the peptidase C1 family.

The catalysed reaction is Hydrolysis of proteins with broad specificity for peptide bonds. Bz-Phe-Val-Arg-|-NHMec is a good synthetic substrate, but there is no action on Z-Arg-Arg-|-NHMec (cf. stem bromelain).. Cysteine proteinase with a high level of diversity in substrate specificity. This Ananas comosus (Pineapple) protein is Fruit bromelain.